The sequence spans 109 residues: MSSFIDITNVISSHVEANLPAVSAENVQSLANGAGIAYLGKYIGTGITMLAAGAVGLMQGFSTANAVQAVARNPEAQPKILSTMIVGLALAEAVAIYALIVSILIIFVA.

The next 2 membrane-spanning stretches (helical) occupy residues 42-62 and 88-108; these read YIGT…QGFS and LALA…IIFV.

It belongs to the ATPase C chain family. In terms of assembly, F-type ATPases have 2 components, F(1) - the catalytic core - and F(0) - the membrane proton channel. F(1) has five subunits: alpha(3), beta(3), gamma(1), delta(1), epsilon(1). F(0) has three main subunits: a(1), b(2) and c(10-14). The alpha and beta chains form an alternating ring which encloses part of the gamma chain. F(1) is attached to F(0) by a central stalk formed by the gamma and epsilon chains, while a peripheral stalk is formed by the delta and b chains.

It is found in the cell membrane. F(1)F(0) ATP synthase produces ATP from ADP in the presence of a proton or sodium gradient. F-type ATPases consist of two structural domains, F(1) containing the extramembraneous catalytic core and F(0) containing the membrane proton channel, linked together by a central stalk and a peripheral stalk. During catalysis, ATP synthesis in the catalytic domain of F(1) is coupled via a rotary mechanism of the central stalk subunits to proton translocation. Its function is as follows. Key component of the F(0) channel; it plays a direct role in translocation across the membrane. A homomeric c-ring of between 10-14 subunits forms the central stalk rotor element with the F(1) delta and epsilon subunits. This is ATP synthase subunit c from Ureaplasma urealyticum serovar 10 (strain ATCC 33699 / Western).